A 91-amino-acid chain; its full sequence is UPF0213 protein NGO_1598 (91 aa).

The region spanning 4 to 83 (SNWSVYLILC…AAQKRQLWEQ (80 aa)) is the GIY-YIG domain.

It belongs to the UPF0213 family.

This is UPF0213 protein NGO_1598 from Neisseria gonorrhoeae (strain ATCC 700825 / FA 1090).